The following is a 468-amino-acid chain: Putative ankyrin repeat protein R580 (468 aa).

ANK repeat units lie at residues 12 to 41, 189 to 218, 249 to 278, 336 to 365, 367 to 393, and 394 to 423; these read DYFDPINLSIKDGGEKTIDIIDCERYTLID, VINKSLNFASKSNMSELAIFLVDNGAEINC, CHFDLVEAVFNSGSLEMIETFIDFGMKINS, SFDNALVSTINAGKFKNAEYLLFSGANINF, NMPTNCMFKINFQTIKFLIDNNFDLEI, and HGTLILNKSLLNGYYDCANILIENGVKFSL.

This is Putative ankyrin repeat protein R580 from Acanthamoeba polyphaga (Amoeba).